The following is a 167-amino-acid chain: UPF0179 protein PAE0681 (167 aa).

A disordered region spans residues 142–167 (PSPSGSSISATSQGPSRAPPSRRLLK). Low complexity predominate over residues 145-157 (SGSSISATSQGPS).

This sequence belongs to the UPF0179 family.

This Pyrobaculum aerophilum (strain ATCC 51768 / DSM 7523 / JCM 9630 / CIP 104966 / NBRC 100827 / IM2) protein is UPF0179 protein PAE0681.